Here is a 241-residue protein sequence, read N- to C-terminus: Uridylate kinase (241 aa).

Residue 12–15 (KISG) participates in ATP binding. The tract at residues 20–25 (GDKGNG) is involved in allosteric activation by GTP. Gly54 lines the UMP pocket. Positions 55 and 59 each coordinate ATP. Residues Asp74 and 135–142 (TGNPYFST) each bind UMP. Residues Asn163, Tyr169, and Asp172 each contribute to the ATP site.

This sequence belongs to the UMP kinase family. In terms of assembly, homohexamer.

The protein localises to the cytoplasm. It carries out the reaction UMP + ATP = UDP + ADP. It participates in pyrimidine metabolism; CTP biosynthesis via de novo pathway; UDP from UMP (UMPK route): step 1/1. Its activity is regulated as follows. Allosterically activated by GTP. Inhibited by UTP. In terms of biological role, catalyzes the reversible phosphorylation of UMP to UDP. In Lactobacillus acidophilus (strain ATCC 700396 / NCK56 / N2 / NCFM), this protein is Uridylate kinase.